A 307-amino-acid polypeptide reads, in one-letter code: Mitochondrial brown fat uncoupling protein 1 (307 aa).

Over 1 to 10 the chain is Mitochondrial intermembrane; that stretch reads MVSSTTSEVQ. A helical transmembrane segment spans residues 11-32; it reads PTMGVKIFSAGVSACLADIITF. Solcar repeat units lie at residues 11 to 102, 111 to 201, and 210 to 295; these read PTMG…VQEY, ASLG…MKGA, and DDVP…LKKE. Residues 33-73 lie on the Mitochondrial matrix side of the membrane; sequence PLDTAKVRLQIQGEGQASSTIRYKGVLGTITTLAKTEGLPK. Residue Lys-56 participates in fatty acid 16:0 binding. Residues 74 to 96 form a helical membrane-spanning segment; that stretch reads LYSGLPAGIQRQISFASLRIGLY. The Mitochondrial intermembrane portion of the chain corresponds to 97–116; the sequence is DTVQEYFSSGRETPASLGSK. The chain crosses the membrane as a helical span at residues 117 to 133; it reads ISAGLMTGGVAVFIGQP. Residues 134–178 lie on the Mitochondrial matrix side of the membrane; that stretch reads TEVVKVRMQAQSHLHGIKPRYTGTYNAYRVIATTESLSTLWKGTT. The chain crosses the membrane as a helical span at residues 179 to 195; it reads PNLMRNVIINCTELVTY. Over 196 to 212 the chain is Mitochondrial intermembrane; the sequence is DLMKGALVNHHILADDV. Residues 213-232 form a helical membrane-spanning segment; sequence PCHLLSALVAGFCTTLLASP. The Mitochondrial matrix portion of the chain corresponds to 233–266; the sequence is VDVVKTRFINSLPGQYPSVPSCAMTMYTKEGPAA. At Cys-254 the chain carries Cysteine sulfenic acid (-SOH). A helical transmembrane segment spans residues 267 to 289; that stretch reads FFKGFAPSFLRLGSWNVIMFVCF. Lys-269 contacts fatty acid 16:0. The Mitochondrial intermembrane segment spans residues 290-307; it reads EQLKKELMKSRQTVDCTT.

The protein belongs to the mitochondrial carrier (TC 2.A.29) family. Most probably functions as a monomer. Binds one purine nucleotide per monomer. However, has also been suggested to function as a homodimer or a homotetramer. Tightly associates with cardiolipin in the mitochondrion inner membrane; may stabilize and regulate its activity. Post-translationally, may undergo ubiquitin-mediated proteasomal degradation. In terms of processing, may undergo sulfenylation upon cold exposure. May increase the sensitivity of UCP1 thermogenic function to the activation by noradrenaline probably through structural effects. As to expression, brown adipose tissue.

It localises to the mitochondrion inner membrane. It carries out the reaction H(+)(in) = H(+)(out). Has no constitutive proton transporter activity and has to be activated by long-chain fatty acids/LCFAs. Inhibited by purine nucleotides. Both purine nucleotides and LCFAs bind the cytosolic side of the transporter and directly compete to activate or inhibit it. Activated by noradrenaline and reactive oxygen species. Despite lacking canonical translational encoding for selenocysteine, a small pool of the protein has been observed to selectively incorporate selenocysteine at 'Cys-254'. Selenocysteine-modified protein is highly sensitive to redox modification and may constitute a pool of protein highly sensitive to activation by elevated levels of reactive oxygen species (ROS). In terms of biological role, mitochondrial protein responsible for thermogenic respiration, a specialized capacity of brown adipose tissue and beige fat that participates in non-shivering adaptive thermogenesis to temperature and diet variations and more generally to the regulation of energy balance. Functions as a long-chain fatty acid/LCFA and proton symporter, simultaneously transporting one LCFA and one proton through the inner mitochondrial membrane. However, LCFAs remaining associated with the transporter via their hydrophobic tails, it results in an apparent transport of protons activated by LCFAs. Thereby, dissipates the mitochondrial proton gradient and converts the energy of substrate oxydation into heat instead of ATP. Regulates the production of reactive oxygen species/ROS by mitochondria. The polypeptide is Mitochondrial brown fat uncoupling protein 1 (Rattus norvegicus (Rat)).